The following is a 199-amino-acid chain: V-set and transmembrane domain-containing protein 5 (199 aa).

Positions 1–27 (MRPLRCGERTQGIPLGLLAFWVTAARC) are cleaved as a signal peptide. Residues 28–146 (LQSQGVSLYI…VSEIRYEDLH (119 aa)) lie on the Extracellular side of the membrane. The region spanning 35 to 138 (LYIPQSAINA…QSGTILLRVS (104 aa)) is the Ig-like C2-type domain. 3 N-linked (GlcNAc...) asparagine glycosylation sites follow: Asn43, Asn87, and Asn101. A helical membrane pass occupies residues 147 to 167 (FVAVFFALLAAVAVVLISLMW). Residues 168–199 (VCNQCAYKFQRKRRYKLKESTTEEIEMKEVEC) are Cytoplasmic-facing. Residues 169 to 185 (CNQCAYKFQRKRRYKLK) form an important for CDC42-dependent filopodia induction region.

In terms of assembly, can homooligomerize through cis interactions within the same cell membrane. Post-translationally, N-glycosylated. As to expression, highly expressed in the central nervous system (CNS), with the highest expression in thalamus, hippocampus, cerebrum, midbrain and spinal cord. Also highly expressed in stomach, kidney and small intestine.

It is found in the cell membrane. It localises to the cell projection. The protein resides in the dendrite. Its subcellular location is the axon. Cell adhesion-like membrane protein of the central nervous system (CNS) which modulates both the position and complexity of central neurons by altering their membrane morphology and dynamics. Involved in the formation of neuronal dendrites and protrusions including dendritic filopodia. In synaptogenesis, regulates synapse formation by altering dendritic spine morphology and actin distribution. Promotes formation of unstable neuronal spines such as thin and branched types. Regulates neuronal morphogenesis and migration during cortical development in the brain. The protein is V-set and transmembrane domain-containing protein 5 of Mus musculus (Mouse).